We begin with the raw amino-acid sequence, 102 residues long: Small ribosomal subunit protein bS6 (102 aa).

This sequence belongs to the bacterial ribosomal protein bS6 family.

Binds together with bS18 to 16S ribosomal RNA. In Desulfovibrio desulfuricans (strain ATCC 27774 / DSM 6949 / MB), this protein is Small ribosomal subunit protein bS6.